The primary structure comprises 395 residues: Elongation factor Tu (395 aa).

Residues 10-204 (KTHANIGTIG…AVDSYIPTPE (195 aa)) enclose the tr-type G domain. Positions 19 to 26 (GHVDHGKT) are G1. 19–26 (GHVDHGKT) contacts GTP. Threonine 26 contributes to the Mg(2+) binding site. The segment at 60–64 (GITIN) is G2. The tract at residues 81-84 (DCPG) is G3. GTP is bound by residues 81–85 (DCPGH) and 136–139 (NKCD). The segment at 136–139 (NKCD) is G4. The G5 stretch occupies residues 174-176 (SAL).

This sequence belongs to the TRAFAC class translation factor GTPase superfamily. Classic translation factor GTPase family. EF-Tu/EF-1A subfamily. In terms of assembly, monomer.

The protein resides in the cytoplasm. The catalysed reaction is GTP + H2O = GDP + phosphate + H(+). Its function is as follows. GTP hydrolase that promotes the GTP-dependent binding of aminoacyl-tRNA to the A-site of ribosomes during protein biosynthesis. In Lysinibacillus sphaericus (strain C3-41), this protein is Elongation factor Tu.